The chain runs to 127 residues: Large ribosomal subunit protein bL12 (127 aa).

Belongs to the bacterial ribosomal protein bL12 family. As to quaternary structure, homodimer. Part of the ribosomal stalk of the 50S ribosomal subunit. Forms a multimeric L10(L12)X complex, where L10 forms an elongated spine to which 2 to 4 L12 dimers bind in a sequential fashion. Binds GTP-bound translation factors.

Forms part of the ribosomal stalk which helps the ribosome interact with GTP-bound translation factors. Is thus essential for accurate translation. In Streptomyces avermitilis (strain ATCC 31267 / DSM 46492 / JCM 5070 / NBRC 14893 / NCIMB 12804 / NRRL 8165 / MA-4680), this protein is Large ribosomal subunit protein bL12.